A 217-amino-acid polypeptide reads, in one-letter code: Large ribosomal subunit protein uL3 (217 aa).

The protein belongs to the universal ribosomal protein uL3 family. In terms of assembly, part of the 50S ribosomal subunit. Forms a cluster with proteins L14 and L19.

In terms of biological role, one of the primary rRNA binding proteins, it binds directly near the 3'-end of the 23S rRNA, where it nucleates assembly of the 50S subunit. The chain is Large ribosomal subunit protein uL3 from Mycolicibacterium smegmatis (strain ATCC 700084 / mc(2)155) (Mycobacterium smegmatis).